The primary structure comprises 377 residues: Erythronate-4-phosphate dehydrogenase (377 aa).

Residues Ser45 and Thr66 each contribute to the substrate site. Residues Asp146 and Thr175 each coordinate NAD(+). The active site involves Arg208. Asp232 lines the NAD(+) pocket. Residue Glu237 is part of the active site. Catalysis depends on His254, which acts as the Proton donor. Gly257 lines the NAD(+) pocket. Residue Tyr258 coordinates substrate.

This sequence belongs to the D-isomer specific 2-hydroxyacid dehydrogenase family. PdxB subfamily. In terms of assembly, homodimer.

The protein localises to the cytoplasm. The enzyme catalyses 4-phospho-D-erythronate + NAD(+) = (R)-3-hydroxy-2-oxo-4-phosphooxybutanoate + NADH + H(+). Its pathway is cofactor biosynthesis; pyridoxine 5'-phosphate biosynthesis; pyridoxine 5'-phosphate from D-erythrose 4-phosphate: step 2/5. Functionally, catalyzes the oxidation of erythronate-4-phosphate to 3-hydroxy-2-oxo-4-phosphonooxybutanoate. The polypeptide is Erythronate-4-phosphate dehydrogenase (Sodalis glossinidius (strain morsitans)).